The sequence spans 373 residues: MYEKINEPLSIRGLKLKNRIVFAPTTMGLSEEEYLERLGIIAAGGAAMLVIGDVPVLRHSLFAKSLYSTKGFEFYRRVTEVIHKNGAKACAQLHVSDSDIKGMLRFVPGMLMKRITPDRLRELMNERTGPYITGIPESKIGKITASFGDAAVLAGKAGFDMIQVHGDRMCGSFSSSVFNHRTDSYGASAANRAKFACECIAAVRQALPDMPVEYKLAVRQENPHYGNAGILVEELPVFLPLLEKAGVDSYHVALADHSSLSDTIPPKSHPYFSGEGCFLKYCDEVKKYSSLPVCAVGGLTNPDFVEEQLTRSRIDYAAMSRQLIADPEWPNKTAGKNQDKIRFCVRCNRECLGGMMEHRGVHCIYDKKKEDVQ.

Residue Gln92 coordinates FMN. The Proton donor role is filled by Arg168. Residue Lys215 participates in FMN binding. [4Fe-4S] cluster is bound by residues Cys344, Cys347, Cys351, and Cys363.

It belongs to the NADH:flavin oxidoreductase/NADH oxidase family. It depends on FMN as a cofactor. The cofactor is [4Fe-4S] cluster.

It catalyses the reaction urobilinogen + 4 A = (4Z,15Z)-bilirubin IXalpha + 4 AH2. The enzyme catalyses urobilinogen + 2 A = (4Z,15Z)-mesobilirubin IXalpha + 2 AH2. It participates in porphyrin-containing compound metabolism; protoheme degradation. Bilirubin reductase that catalyzes reduction of mesobilirubin and/or bilirubin to urobilinogen, a key step during heme degradation. Cooperates with BilS, which is probably involved in electron transfer for BilR. Urobilinogen then spontaneously degrades into urobilin, which gives urine its distinctive yellow color. The sequence is that of Bilirubin reductase from Clostridium symbiosum (strain WAL-14163).